A 332-amino-acid chain; its full sequence is Cilia- and flagella-associated protein 119 (332 aa).

The segment covering 1–10 (MITPRSSQSL) has biased composition (polar residues). Disordered regions lie at residues 1-70 (MITP…ANLF), 246-271 (EDEEATVEQAATPQEEEPEAVTEAEQ), and 308-332 (RLSNRLAALERPYQTPPSKGKSKAK). A compositionally biased stretch (basic and acidic residues) spans 14–30 (VQTELEHSPKLQEEPDR). A compositionally biased stretch (polar residues) spans 49–58 (ESPAEATSSP). The stretch at 287-308 (LNKELRQLQQLVEERLKESEER) forms a coiled coil.

As to expression, specifically expressed in testis (at protein level).

The protein resides in the cell projection. Its subcellular location is the cilium. The protein localises to the flagellum. It localises to the cytoplasmic vesicle. It is found in the secretory vesicle. The protein resides in the acrosome. Its subcellular location is the cytoplasm. This chain is Cilia- and flagella-associated protein 119, found in Rattus norvegicus (Rat).